We begin with the raw amino-acid sequence, 837 residues long: Translation initiation factor IF-2 (837 aa).

The tract at residues 94-252 (QRSPEEIEAE…NAHGFQSPTG (159 aa)) is disordered. A compositionally biased stretch (basic and acidic residues) spans 96 to 136 (SPEEIEAERKRELDERRAVENAARQKAEEEARVRAEEEARR). A compositionally biased stretch (low complexity) spans 137-171 (QPAAPSAPAEAVAAPAPVAEPVREAAPVVAAAPAA). 2 stretches are compositionally biased toward basic and acidic residues: residues 172-213 (DTRK…EKAP) and 221-230 (TTDEESDGFR). Over residues 231–244 (RGGRGKAKLKKRNA) the composition is skewed to basic residues. One can recognise a tr-type G domain in the interval 337-506 (PRAPVVTVMG…LLQAEVLELT (170 aa)). The G1 stretch occupies residues 346-353 (GHVDHGKT). Residue 346 to 353 (GHVDHGKT) participates in GTP binding. Residues 371 to 375 (GITQH) are G2. Positions 392-395 (DTPG) are G3. GTP is bound by residues 392–396 (DTPGH) and 446–449 (NKID). The G4 stretch occupies residues 446–449 (NKID). The segment at 482–484 (SAK) is G5.

The protein belongs to the TRAFAC class translation factor GTPase superfamily. Classic translation factor GTPase family. IF-2 subfamily.

The protein localises to the cytoplasm. One of the essential components for the initiation of protein synthesis. Protects formylmethionyl-tRNA from spontaneous hydrolysis and promotes its binding to the 30S ribosomal subunits. Also involved in the hydrolysis of GTP during the formation of the 70S ribosomal complex. The protein is Translation initiation factor IF-2 of Pseudomonas fluorescens (strain Pf0-1).